The following is a 241-amino-acid chain: Large ribosomal subunit protein uL13c (241 aa).

The transit peptide at 1-50 (MAVLCSSSTVILSSSSVKSSGSERKSPFLGFSLTAISKPSVRVGIYANSK) directs the protein to the chloroplast.

The protein belongs to the universal ribosomal protein uL13 family. Part of the 50S ribosomal subunit.

The protein localises to the plastid. It is found in the chloroplast. This chain is Large ribosomal subunit protein uL13c (RPL13), found in Arabidopsis thaliana (Mouse-ear cress).